Consider the following 112-residue polypeptide: uncharacterized protein (112 aa).

The protein to Buchnera BUsg564.

This is an uncharacterized protein from Buchnera aphidicola subsp. Acyrthosiphon pisum (strain APS) (Acyrthosiphon pisum symbiotic bacterium).